A 233-amino-acid chain; its full sequence is Glutathione S-transferase U15 (233 aa).

The GST N-terminal domain maps to Glu5–Gly85. Residues Ser15 to Pro16, Ser42 to Lys43, Lys56 to Val57, and Val69 to Ser70 contribute to the glutathione site. The GST C-terminal domain maps to His92 to Phe219. Position 158 is a phosphothreonine (Thr158).

This sequence belongs to the GST superfamily. Tau family.

The protein resides in the cytoplasm. Its subcellular location is the cytosol. It carries out the reaction RX + glutathione = an S-substituted glutathione + a halide anion + H(+). Functionally, may be involved in the conjugation of reduced glutathione to a wide number of exogenous and endogenous hydrophobic electrophiles and have a detoxification role against certain herbicides. This chain is Glutathione S-transferase U15 (GSTU15), found in Arabidopsis thaliana (Mouse-ear cress).